Here is a 430-residue protein sequence, read N- to C-terminus: Glutamine synthetase leaf isozyme, chloroplastic (430 aa).

Residues 1 to 49 constitute a chloroplast transit peptide; that stretch reads MAQILAPSTQWQMRITKTSPCATPITSKMWSSLVMKQTKKVAHSAKFRV. The GS beta-grasp domain occupies 77–157; sequence IIAEYIWIGG…VVCDAYTPAG (81 aa). Residues 99–119 form a disordered region; sequence SKPVSHPSEVPKWNYDGSSTG. In terms of domain architecture, GS catalytic spans 161–430; it reads PTNKRHRAAE…LAAQKIALKV (270 aa).

It belongs to the glutamine synthetase family. As to quaternary structure, homooctamer.

The protein resides in the plastid. It is found in the chloroplast. It carries out the reaction L-glutamate + NH4(+) + ATP = L-glutamine + ADP + phosphate + H(+). Its function is as follows. The light-modulated chloroplast enzyme, encoded by a nuclear gene and expressed primarily in leaves, is responsible for the reassimilation of the ammonia generated by photorespiration. In Pisum sativum (Garden pea), this protein is Glutamine synthetase leaf isozyme, chloroplastic (GS2).